The following is a 475-amino-acid chain: Peroxisome proliferator-activated receptor gamma (475 aa).

Residue Thr54 is glycosylated (O-linked (GlcNAc) threonine). Residue Ser82 is modified to Phosphoserine; by MAPK. Positions 106–180 form a DNA-binding region, nuclear receptor; the sequence is AIECRVCGDK…VGMSHNAIRF (75 aa). NR C4-type zinc fingers lie at residues 109–129 and 146–168; these read CRVCGDKASGFHYGVHACEGC and CDLNCRIHKKSRNKCQYCRFQKC. Residues 175–250 form an interaction with FAM120B region; the sequence is HNAIRFGRMP…DKSPFVIYDM (76 aa). Residues 208 to 473 form the NR LBD domain; that stretch reads DLRALAKHLY…HPLLQEIYKD (266 aa). Residue Lys222 forms a Glycyl lysine isopeptide (Lys-Gly) (interchain with G-Cter in ubiquitin) linkage. Positions 465 to 473 match the 9aaTAD motif; sequence PLLQEIYKD.

Belongs to the nuclear hormone receptor family. NR1 subfamily. As to quaternary structure, interacts with FOXO1 (acetylated form). Heterodimer with other nuclear receptors, such as RXRA. The heterodimer with the retinoic acid receptor RXRA is called adipocyte-specific transcription factor ARF6. Interacts with NCOA6 coactivator, leading to a strong increase in transcription of target genes. Interacts with coactivator PPARBP, leading to a mild increase in transcription of target genes. Interacts with NOCA7 in a ligand-inducible manner. Interacts with NCOA1 and NCOA2 LXXLL motifs. Interacts with ASXL1, ASXL2, DNTTIP2, FAM120B, MAP2K1/MEK1, NR0B2, PDPK1, PRDM16, PRMT2 and TGFB1I1. Interacts (when activated by agonist) with PPP5C. Interacts with HELZ2 and THRAP3; the interaction stimulates the transcriptional activity of PPARG. Interacts with PER2, the interaction is ligand dependent and blocks PPARG recruitment to target promoters. Interacts with NOCT. Interacts with ACTN4. Interacts (when in the liganded conformation) with GPS2. Interacts with CRY1 and CRY2 in a ligand-dependent manner. In the absence of hormonal ligand, interacts with TACC1. In macrophages, interacts with PAQR3 and STUB1; the interactions promote PPARG poylubiquitination and STUB1-mediated degradation. Post-translationally, O-GlcNAcylation at Thr-54 reduces transcriptional activity in adipocytes. Phosphorylated at basal conditions and dephosphorylated when treated with the ligand. May be dephosphorylated by PPP5C. The phosphorylated form may be inactive and dephosphorylation induces adipogenic activity. In terms of processing, ubiquitinated by E3 ubiquitin-protein ligase complex containing FBXO9; leading to proteasomal degradation. Ubiquitinated at Lys-222 by TRIM55 leading to proteasomal degradation. Ubiquitinated by E3 ubiquitin-protein ligase STUB1/CHIP; leading to proteasomal degradation.

Its subcellular location is the nucleus. The protein resides in the cytoplasm. With respect to regulation, PDPK1 activates its transcriptional activity independently of its kinase activity. Interacts with HELZ2 and THRAP3; the interaction enhances the transcriptional activity of PPARG. Nuclear receptor that binds peroxisome proliferators such as hypolipidemic drugs and fatty acids. Once activated by a ligand, the nuclear receptor binds to DNA specific PPAR response elements (PPRE) and modulates the transcription of its target genes, such as acyl-CoA oxidase. It therefore controls the peroxisomal beta-oxidation pathway of fatty acids. Key regulator of adipocyte differentiation and glucose homeostasis. ARF6 acts as a key regulator of the tissue-specific adipocyte P2 (aP2) enhancer. Acts as a critical regulator of gut homeostasis by suppressing NF-kappa-B-mediated pro-inflammatory responses. Plays a role in the regulation of cardiovascular circadian rhythms by regulating the transcription of BMAL1 in the blood vessels. The protein is Peroxisome proliferator-activated receptor gamma (PPARG) of Cricetulus griseus (Chinese hamster).